The primary structure comprises 297 residues: MADINLKGMGVALITPFKEDESVDYEALGKLVDYQVQNGTDYLVVLGTTAETPTLTEEEKKNIISLVVTRVRGRIPIVLGVGGNCTRSVVEKLKTDNFEGIDAILSVVPYYNKPSQEGIYQHYKAIANATHLPIVLYNVPGRTGVNMTAETTLRIAREFDNVIAVKEASGNITQMDDIIKNKPARFNVISGDDGITFPLMTLGAVGVISVIGNAFPREFSRMVRLALAGDYDSARTIHHSFTELFSLLFVDGNPAGAKSMLNMMGFIENKLRLPLVPTRIVTYEKIREVLRQLSIKC.

Thr49 is a binding site for pyruvate. The active-site Proton donor/acceptor is the Tyr137. Residue Lys166 is the Schiff-base intermediate with substrate of the active site. Residue Ile208 coordinates pyruvate.

The protein belongs to the DapA family. Homotetramer; dimer of dimers.

It localises to the cytoplasm. The enzyme catalyses L-aspartate 4-semialdehyde + pyruvate = (2S,4S)-4-hydroxy-2,3,4,5-tetrahydrodipicolinate + H2O + H(+). It participates in amino-acid biosynthesis; L-lysine biosynthesis via DAP pathway; (S)-tetrahydrodipicolinate from L-aspartate: step 3/4. Its function is as follows. Catalyzes the condensation of (S)-aspartate-beta-semialdehyde [(S)-ASA] and pyruvate to 4-hydroxy-tetrahydrodipicolinate (HTPA). In Parabacteroides distasonis (strain ATCC 8503 / DSM 20701 / CIP 104284 / JCM 5825 / NCTC 11152), this protein is 4-hydroxy-tetrahydrodipicolinate synthase.